A 408-amino-acid chain; its full sequence is tRNA pseudouridine synthase D (408 aa).

Asp-76 acts as the Nucleophile in catalysis. The region spanning 149 to 362 (GFINYYDSQR…NSFERKVRIL (214 aa)) is the TRUD domain.

This sequence belongs to the pseudouridine synthase TruD family.

It carries out the reaction uridine(13) in tRNA = pseudouridine(13) in tRNA. Its function is as follows. Responsible for synthesis of pseudouridine from uracil-13 in transfer RNAs. The sequence is that of tRNA pseudouridine synthase D from Leptospira interrogans serogroup Icterohaemorrhagiae serovar Lai (strain 56601).